The sequence spans 159 residues: Probable acetolactate synthase small subunit (159 aa).

The region spanning 4–78 (TIAVLVENKP…ETIKVSEITE (75 aa)) is the ACT domain.

Belongs to the acetolactate synthase small subunit family. In terms of assembly, dimer of large and small chains.

It catalyses the reaction 2 pyruvate + H(+) = (2S)-2-acetolactate + CO2. It participates in amino-acid biosynthesis; L-isoleucine biosynthesis; L-isoleucine from 2-oxobutanoate: step 1/4. The protein operates within amino-acid biosynthesis; L-valine biosynthesis; L-valine from pyruvate: step 1/4. The protein is Probable acetolactate synthase small subunit (ilvH) of Archaeoglobus fulgidus (strain ATCC 49558 / DSM 4304 / JCM 9628 / NBRC 100126 / VC-16).